The chain runs to 29 residues: Cyclotide vibi-B (29 aa).

Positions 1–29 (GLPVCGETCFGGTCNTPGCTCSYPICTRN) form a cross-link, cyclopeptide (Gly-Asn). 3 disulfides stabilise this stretch: Cys-5-Cys-19, Cys-9-Cys-21, and Cys-14-Cys-26.

Post-translationally, this is a cyclic peptide.

Its function is as follows. Probably participates in a plant defense mechanism. This Viola biflora (Yellow wood violet) protein is Cyclotide vibi-B.